Reading from the N-terminus, the 679-residue chain is Methionine--tRNA ligase (679 aa).

The 'HIGH' region motif lies at 15-25; the sequence is PYANGPIHLGH. Positions 146, 149, 159, and 162 each coordinate Zn(2+). Positions 332 to 336 match the 'KMSKS' region motif; the sequence is KMSKS. Residue K335 coordinates ATP. Residues 578–679 enclose the tRNA-binding domain; the sequence is DFAKIDLRIA…EGAQPGMKVK (102 aa).

It belongs to the class-I aminoacyl-tRNA synthetase family. MetG type 1 subfamily. Homodimer. Zn(2+) serves as cofactor.

Its subcellular location is the cytoplasm. It catalyses the reaction tRNA(Met) + L-methionine + ATP = L-methionyl-tRNA(Met) + AMP + diphosphate. Its function is as follows. Is required not only for elongation of protein synthesis but also for the initiation of all mRNA translation through initiator tRNA(fMet) aminoacylation. This is Methionine--tRNA ligase from Shewanella pealeana (strain ATCC 700345 / ANG-SQ1).